Consider the following 363-residue polypeptide: Flagellar P-ring protein (363 aa).

Positions 1–20 (MKLKLILAVAMLAFSLPSQA) are cleaved as a signal peptide.

This sequence belongs to the FlgI family. The basal body constitutes a major portion of the flagellar organelle and consists of four rings (L,P,S, and M) mounted on a central rod.

The protein resides in the periplasm. It localises to the bacterial flagellum basal body. Assembles around the rod to form the L-ring and probably protects the motor/basal body from shearing forces during rotation. In Shewanella sp. (strain MR-4), this protein is Flagellar P-ring protein.